A 429-amino-acid polypeptide reads, in one-letter code: Violacein synthase (429 aa).

3–21 (RAIIVGGGLAGGLTAIYLA) serves as a coordination point for FAD.

FAD serves as cofactor.

The catalysed reaction is protoviolaceinate + NADPH + O2 + H(+) = violaceinate + NADP(+) + H2O. It catalyses the reaction protoviolaceinate + NADH + O2 + H(+) = violaceinate + NAD(+) + H2O. The enzyme catalyses protodeoxyviolaceinate + NADPH + O2 + H(+) = deoxyviolaceinate + NADP(+) + H2O. It carries out the reaction protodeoxyviolaceinate + NADH + O2 + H(+) = deoxyviolaceinate + NAD(+) + H2O. It functions in the pathway pigment biosynthesis; violacein biosynthesis. Functionally, catalyzes the hydroxylation of the 16-position of protoviolaceinate and protodeoxyviolaceinate to form violacein and deoxyviolacein, respectively. The chain is Violacein synthase (vioC) from Chromobacterium violaceum (strain ATCC 12472 / DSM 30191 / JCM 1249 / CCUG 213 / NBRC 12614 / NCIMB 9131 / NCTC 9757 / MK).